A 324-amino-acid chain; its full sequence is Gamma-soluble NSF attachment protein (324 aa).

Residues 285 to 298 are compositionally biased toward polar residues; that stretch reads NPTINSTAPQQQYS. Residues 285–324 form a disordered region; the sequence is NPTINSTAPQQQYSNTTTTTTNNTNNNNPTSQQDDDEDVL. Residues 299–312 are compositionally biased toward low complexity; that stretch reads NTTTTTTNNTNNNN.

It belongs to the SNAP family. Interacts with nsfA and probably SNARE proteins.

It is found in the cytoplasmic vesicle membrane. Its function is as follows. May be required for vesicular transport between the endoplasmic reticulum and the Golgi apparatus. Involved in vesicle fusion with nsfA and probably SNARE proteins. In Dictyostelium discoideum (Social amoeba), this protein is Gamma-soluble NSF attachment protein (snpC).